Reading from the N-terminus, the 151-residue chain is 3-hydroxyacyl-[acyl-carrier-protein] dehydratase FabZ (151 aa).

The active site involves His54.

It belongs to the thioester dehydratase family. FabZ subfamily.

It localises to the cytoplasm. The catalysed reaction is a (3R)-hydroxyacyl-[ACP] = a (2E)-enoyl-[ACP] + H2O. Functionally, involved in unsaturated fatty acids biosynthesis. Catalyzes the dehydration of short chain beta-hydroxyacyl-ACPs and long chain saturated and unsaturated beta-hydroxyacyl-ACPs. The polypeptide is 3-hydroxyacyl-[acyl-carrier-protein] dehydratase FabZ (Blochmanniella pennsylvanica (strain BPEN)).